The chain runs to 353 residues: MIYKFRKVNPITWKNDHVVLIDQTCLPEEYKTVEISSYEEMAVAIKTMIVRGAPAIGVSVAYGMYLGARETVTNDRNEFLKQLEEIAVIFRRTRPTAVNLFWAIERILKVANKTNGTVKEIQEAVLETAKKIHQEDLETCKNIGDRAVEILPTKPEKLNILTHCNAGALATAGYGTALGVIRSAWRDGRLGKVYADETRPRLQGAKLTTWECVQENIPVTLISDNMAAHCMKQGLIHAVVVGADRIAANGDTANKIGTYSLAIVSQAHNIPLYVAAPLSTIDFKISDGSEIPIEERDTKEIYQVGETRICPKQVEFYNPAFDVTPAELITGIMTEHGTVLPGELEQFRVKQLV.

Substrate is bound by residues 51-53 (RGA), R94, and Q203. Residue D244 is the Proton donor of the active site. Position 254–255 (254–255 (NK)) interacts with substrate.

It belongs to the eIF-2B alpha/beta/delta subunits family. MtnA subfamily.

It carries out the reaction 5-(methylsulfanyl)-alpha-D-ribose 1-phosphate = 5-(methylsulfanyl)-D-ribulose 1-phosphate. The protein operates within amino-acid biosynthesis; L-methionine biosynthesis via salvage pathway; L-methionine from S-methyl-5-thio-alpha-D-ribose 1-phosphate: step 1/6. Functionally, catalyzes the interconversion of methylthioribose-1-phosphate (MTR-1-P) into methylthioribulose-1-phosphate (MTRu-1-P). In Trichodesmium erythraeum (strain IMS101), this protein is Methylthioribose-1-phosphate isomerase.